The primary structure comprises 624 residues: Chaperone protein HtpG (624 aa).

Positions 1–336 (MSMKGQETRG…SNDLPLNVSR (336 aa)) are a; substrate-binding. The b stretch occupies residues 337–552 (EILQDSRVTQ…ADEMSTQMAK (216 aa)). The tract at residues 553 to 624 (LFAAAGQQAP…IRRMNQLLTA (72 aa)) is c.

Belongs to the heat shock protein 90 family. In terms of assembly, homodimer.

The protein localises to the cytoplasm. Its function is as follows. Molecular chaperone. Has ATPase activity. The sequence is that of Chaperone protein HtpG from Yersinia enterocolitica serotype O:8 / biotype 1B (strain NCTC 13174 / 8081).